Here is a 178-residue protein sequence, read N- to C-terminus: MLEGIVRESTGKKATKALRRDGYLIANIYGKDFPNIHAAFKKGDFIRTVRHKEKLAFPVKVGDKELEVVVQEYQKDPVTYDLLHVDLMVAQPGVVTYYMVPIKTVGTPIGLKNKGVLVTSKRRIKVKGAIENIPDSITLDVSNLDVGDAILIRDIELPEGVEHMTAPHVAVVGVVKAK.

The protein belongs to the bacterial ribosomal protein bL25 family. CTC subfamily. Part of the 50S ribosomal subunit; part of the 5S rRNA/L5/L18/L25 subcomplex. Contacts the 5S rRNA. Binds to the 5S rRNA independently of L5 and L18.

In terms of biological role, this is one of the proteins that binds to the 5S RNA in the ribosome where it forms part of the central protuberance. In Nitratiruptor sp. (strain SB155-2), this protein is Large ribosomal subunit protein bL25.